The primary structure comprises 80 residues: MLAPRVSQALIRSFSSTARNRLKNRVPEKQKLFQEDNGIPVYLKGGVVDHILYRVTMGLCLGGTAYGVYCLAWASFPRNK.

A mitochondrion-targeting transit peptide spans 1–21 (MLAPRVSQALIRSFSSTARNR). Topologically, residues 22–46 (LKNRVPEKQKLFQEDNGIPVYLKGG) are mitochondrial matrix. The chain crosses the membrane as a helical span at residues 47–75 (VVDHILYRVTMGLCLGGTAYGVYCLAWAS). The Mitochondrial intermembrane portion of the chain corresponds to 76–80 (FPRNK).

The protein belongs to the cytochrome c oxidase VIIa family. In terms of assembly, component of the complex IV (CIV, cytochrome c oxidase), a multisubunit enzyme composed of 14 subunits. The complex is composed of a catalytic core of 3 subunits MT-CO1, MT-CO2 and MT-CO3, encoded in the mitochondrial DNA, and 11 supernumerary subunits COX4I1 (or COX4I2), COX5A, COX5B, COX6A2 (or COX6A1), COX6B1 (or COX6B2), COX6C, COX7A1 (or COX7A2), COX7B, COX7C, COX8B and NDUFA4, which are encoded in the nuclear genome. The complex exists as a monomer or a dimer and forms supercomplexes (SCs) in the inner mitochondrial membrane with NADH-ubiquinone oxidoreductase (complex I, CI) and ubiquinol-cytochrome c oxidoreductase (cytochrome b-c1 complex, complex III, CIII), resulting in different assemblies (supercomplex SCI(1)III(2)IV(1) and megacomplex MCI(2)III(2)IV(2)).

The protein localises to the mitochondrion inner membrane. The protein operates within energy metabolism; oxidative phosphorylation. Functionally, component of the mitochondrial respiratory complex IV (CIV, also named cytochrome c oxidase complex), the last enzyme in the mitochondrial electron transport chain which drives oxidative phosphorylation. The CIV complex is the component of the respiratory chain that catalyzes the reduction of oxygen to water. Acts as an assembly factor that specifically drives the homodimerization of CIV complexes, mediating the formation of mitochondrial respiratory supercomplexes (respirasomes) containing two CIV: supercomplxes with two molecules of CIV show improved activity. Despite being highly expressed in brown adipose tissue, not required for thermogenesis. The sequence is that of Cytochrome c oxidase subunit 7A1, mitochondrial (COX7A1) from Saimiri sciureus (Common squirrel monkey).